The following is a 934-amino-acid chain: MTMGEIGDSVQLKEEGNKHFQAGEIDQAIDCYTKAIKTCKKEDKKALAVIYRNRSACFLKKENYSNAASDATKAIDVDAADIKALYRRCQAFEKLGKLDMAFKDVQRCATIEPKNKTFLETLRRLGAEIQQKLKTTFSTDSRVQNMFDILFSDEPDKEKREKAANNLIVLAREDAGAERIFQNNGVPLLMQLIDTGKPEMILAAIRTLSGMCTGHRARATAIIHSVGISKLCSIMAVDNEEIALATANLFQCVNDSLSGGDKRNYGKEEALVLDSSKDLKDILLALLEMIASKNVSGHGRDQALNLLTKNVPRQNKKSTDNSKCLFTIDHGLKKILKVCGQVPDLPDQLPMTENTQLIASVLLSKLYDDLRCDPERDQFRDICDDYIKSKFDPNDMDKNIHAINTLSGILQGPFDLGNVLAGRQGVMEMMVALCGSEREVDQLVAVEALIHASTKTSKASFFISNGVSLLKEMYKKTKNEKIKIRALVGLCKLGSAGGDDYSMRQFAEGSTEKLAKQCRKWLCNPTLDVRTRKWAIEGLAYLTNDADVKDDFAEDEPAMRAMFELTKSNDKTILYAVACTLVNCTNSYDKKEIIPEMVQLAKFSKQHVPEQHPKDKKDFIVRRVKRLLKAGVTSALAVMVKADNSILTDQTKEMLARVFLALTEDVKDRGIIVAQGGGKALIPLALEGTDKGKIKASHALAKIAAVSNPEIAFPGERIYEVVRPLVSLLGTDRDGMENFEALRGLTNLAGLNDKLRVKILKEKALPEIENYMFEDHEQIRQAATECMCNLVCCKEVQDRYLEDGNDKLKLLVLLCGEDEEKLQRAAAGALAMLTAAQKKLAVKMTKVTEQWLEILQRLCIHDNPEIQHRGLVTVFNMLDADDQLAKKLVESDMLEILTYVAKLEDNPKKQNAIDAARACLSKAMDNGLIKPFSN.

3 TPR repeats span residues 9 to 42 (SVQL…CKKE), 48 to 81 (AVIY…DAAD), and 83 to 115 (KALY…EPKN). 3 ARM repeats span residues 174–213 (DAGA…GMCT), 216–255 (RARA…CVND), and 753–792 (DKLR…NLVC).

In terms of assembly, interacts with apobec2a, apobec2b, hsp90a.1, hsp90a.2, hsp90ab1 and myosin. As to expression, expressed in striated muscle tissue including somites, heart and craniofacial muscle. Detected in mesoderm adjacent to the dorsal midline during the late gastrula stages and in somitic mesoderm during development of trunk skeletal muscle. Also expressed in cranial skeletal muscle and in cardiac and smooth muscle. Detected in somitic muscle and heart primordium of 24 hour embryos. At later stages, expressed in muscles of pectoral fins, jaw, branchial arches and eye.

It localises to the cytoplasm. Its subcellular location is the myofibril. The protein localises to the sarcomere. It is found in the z line. The protein resides in the a band. It localises to the perinuclear region. Acts as a co-chaperone for HSP90 and is required for proper folding of the myosin motor domain. Plays a role in sarcomere formation during muscle cell development. Required for myoseptal integrity, myofiber attachment, motility and craniofacial development. Is necessary for normal early lens development. This chain is Protein unc-45 homolog B, found in Danio rerio (Zebrafish).